We begin with the raw amino-acid sequence, 518 residues long: 3-phosphoshikimate 1-carboxyvinyltransferase 1, chloroplastic (518 aa).

The N-terminal 74 residues, 1–74 (MAQISSMGQG…RISASVVTAQ (74 aa)), are a transit peptide targeting the chloroplast. 3-phosphoshikimate-binding residues include Lys-97, Ser-98, and Arg-102. Residue Lys-97 participates in phosphoenolpyruvate binding. Gly-175 and Arg-205 together coordinate phosphoenolpyruvate. Ser-252, Ser-253, Gln-254, Ser-280, Asp-405, and Lys-432 together coordinate 3-phosphoshikimate. Gln-254 is a phosphoenolpyruvate binding site. The active-site Proton acceptor is the Asp-405. Residues Arg-436, Arg-478, and Lys-503 each contribute to the phosphoenolpyruvate site.

This sequence belongs to the EPSP synthase family.

The protein localises to the plastid. The protein resides in the chloroplast. It catalyses the reaction 3-phosphoshikimate + phosphoenolpyruvate = 5-O-(1-carboxyvinyl)-3-phosphoshikimate + phosphate. The protein operates within metabolic intermediate biosynthesis; chorismate biosynthesis; chorismate from D-erythrose 4-phosphate and phosphoenolpyruvate: step 6/7. Its function is as follows. Catalyzes the transfer of the enolpyruvyl moiety of phosphoenolpyruvate (PEP) to the 5-hydroxyl of shikimate-3-phosphate (S3P) to produce enolpyruvyl shikimate-3-phosphate and inorganic phosphate. In Nicotiana tabacum (Common tobacco), this protein is 3-phosphoshikimate 1-carboxyvinyltransferase 1, chloroplastic (EPSPS-1).